A 340-amino-acid chain; its full sequence is Glycerol-3-phosphate dehydrogenase [NAD(P)+] (340 aa).

NADPH-binding residues include Ser12, Trp13, Lys34, and Lys107. Residues Lys107, Gly138, and Ser140 each contribute to the sn-glycerol 3-phosphate site. Residue Ala142 coordinates NADPH. Residues Lys193, Asp246, Ser256, Arg257, and Asn258 each coordinate sn-glycerol 3-phosphate. The active-site Proton acceptor is the Lys193. Arg257 contacts NADPH. NADPH-binding residues include Ile281 and Glu283.

Belongs to the NAD-dependent glycerol-3-phosphate dehydrogenase family.

It is found in the cytoplasm. It catalyses the reaction sn-glycerol 3-phosphate + NAD(+) = dihydroxyacetone phosphate + NADH + H(+). The catalysed reaction is sn-glycerol 3-phosphate + NADP(+) = dihydroxyacetone phosphate + NADPH + H(+). The protein operates within membrane lipid metabolism; glycerophospholipid metabolism. Its function is as follows. Catalyzes the reduction of the glycolytic intermediate dihydroxyacetone phosphate (DHAP) to sn-glycerol 3-phosphate (G3P), the key precursor for phospholipid synthesis. The polypeptide is Glycerol-3-phosphate dehydrogenase [NAD(P)+] (Enterococcus faecalis (strain ATCC 700802 / V583)).